Reading from the N-terminus, the 89-residue chain is Small ribosomal subunit protein uS15 (89 aa).

Belongs to the universal ribosomal protein uS15 family. As to quaternary structure, part of the 30S ribosomal subunit. Forms a bridge to the 50S subunit in the 70S ribosome, contacting the 23S rRNA.

In terms of biological role, one of the primary rRNA binding proteins, it binds directly to 16S rRNA where it helps nucleate assembly of the platform of the 30S subunit by binding and bridging several RNA helices of the 16S rRNA. Its function is as follows. Forms an intersubunit bridge (bridge B4) with the 23S rRNA of the 50S subunit in the ribosome. The protein is Small ribosomal subunit protein uS15 of Marinomonas sp. (strain MWYL1).